The primary structure comprises 359 residues: RNA-binding protein 4B (359 aa).

RRM domains follow at residues 2-72 (VKLF…ASKN) and 78-148 (TKLH…LSTS). The segment at 160–177 (SGCYRCGKEGHWSKECPV) adopts a CCHC-type zinc-finger fold. The interval 196-359 (AVRPPYTMGY…YVDRARYSAF (164 aa)) is interaction with TNPO3.

In terms of assembly, interacts with TNPO3, which may mediate nuclear import of the protein.

The protein localises to the nucleus. It localises to the nucleolus. Required for the translational activation of PER1 mRNA in response to circadian clock. Binds directly to the 3'-UTR of the PER1 mRNA. The chain is RNA-binding protein 4B (RBM4B) from Sus scrofa (Pig).